A 213-amino-acid chain; its full sequence is Small ribosomal subunit protein uS4 (213 aa).

Residues 97–165 enclose the S4 RNA-binding domain; sequence RRLDNVVYRM…AKEQLRIKNA (69 aa).

The protein belongs to the universal ribosomal protein uS4 family. As to quaternary structure, part of the 30S ribosomal subunit. Contacts protein S5. The interaction surface between S4 and S5 is involved in control of translational fidelity.

One of the primary rRNA binding proteins, it binds directly to 16S rRNA where it nucleates assembly of the body of the 30S subunit. Functionally, with S5 and S12 plays an important role in translational accuracy. This chain is Small ribosomal subunit protein uS4, found in Psychrobacter sp. (strain PRwf-1).